Reading from the N-terminus, the 72-residue chain is Small, acid-soluble spore protein C (72 aa).

The protein belongs to the alpha/beta-type SASP family.

Functionally, SASP are bound to spore DNA. They are double-stranded DNA-binding proteins that cause DNA to change to an a-like conformation. They protect the DNA backbone from chemical and enzymatic cleavage and are thus involved in dormant spore's high resistance to UV light. This chain is Small, acid-soluble spore protein C (sasP-C), found in Priestia megaterium (Bacillus megaterium).